The following is a 262-amino-acid chain: Indole-3-glycerol phosphate synthase (262 aa).

It belongs to the TrpC family.

The catalysed reaction is 1-(2-carboxyphenylamino)-1-deoxy-D-ribulose 5-phosphate + H(+) = (1S,2R)-1-C-(indol-3-yl)glycerol 3-phosphate + CO2 + H2O. The protein operates within amino-acid biosynthesis; L-tryptophan biosynthesis; L-tryptophan from chorismate: step 4/5. This Bordetella avium (strain 197N) protein is Indole-3-glycerol phosphate synthase.